We begin with the raw amino-acid sequence, 185 residues long: Ribosome-recycling factor (185 aa).

Belongs to the RRF family.

It localises to the cytoplasm. In terms of biological role, responsible for the release of ribosomes from messenger RNA at the termination of protein biosynthesis. May increase the efficiency of translation by recycling ribosomes from one round of translation to another. The polypeptide is Ribosome-recycling factor (Pseudomonas putida (strain W619)).